Reading from the N-terminus, the 112-residue chain is FK506-binding protein 1 (112 aa).

Positions 1–10 (MSAPATTQVE) are enriched in polar residues. Residues 1–20 (MSAPATTQVEILQEGDGKTF) are disordered. Positions 24 to 112 (GDLVTIHYTG…LFDVELLNVN (89 aa)) constitute a PPIase FKBP-type domain.

The protein belongs to the FKBP-type PPIase family. FKBP1 subfamily.

It localises to the cytoplasm. The enzyme catalyses [protein]-peptidylproline (omega=180) = [protein]-peptidylproline (omega=0). Its activity is regulated as follows. Inhibited by both FK506 and rapamycin. In terms of biological role, PPIases accelerate the folding of proteins. It catalyzes the cis-trans isomerization of proline imidic peptide bonds in oligopeptides. This Debaryomyces hansenii (strain ATCC 36239 / CBS 767 / BCRC 21394 / JCM 1990 / NBRC 0083 / IGC 2968) (Yeast) protein is FK506-binding protein 1 (FPR1).